Here is a 256-residue protein sequence, read N- to C-terminus: MGHLPQSLYSAAGPKFPYPGSSGLGVDQRKLTWSRFPVFLRCASTESLTSLTQNNAAEIELKYLVSQHGWDVRRLNRDDEDEIRRVSLVQAEAFHIPLALFDDFFFMFFQAEVLSALLYKLKNSPPDRYACLVAEQTSETETLSSSSVVGVVDVTAQTESSVLRYFPGVEEYLYVSGLAVSKSQRRKKMASTLLKACDVLCYLWGFKLLALRAYEDDAAARNLYSNAGYSVVETDPLWTSTWIGRKRRVLMSKRFS.

The N-terminal 41 residues, 1 to 41 (MGHLPQSLYSAAGPKFPYPGSSGLGVDQRKLTWSRFPVFLR), are a transit peptide targeting the chloroplast. Positions 106–256 (FMFFQAEVLS…RRVLMSKRFS (151 aa)) constitute an N-acetyltransferase domain. Acetyl-CoA contacts are provided by residues 178–180 (LAV), 186–191 (RKKMAS), 217–219 (DAA), and Tyr224. The active-site Proton donor is Tyr224.

The protein belongs to the acetyltransferase family. GNAT subfamily. In terms of assembly, oligomer. In terms of processing, autoacetylated. As to expression, expressed in green tissues.

It is found in the plastid. The protein resides in the chloroplast. The catalysed reaction is an N-terminal L-alpha-aminoacyl-[protein] + acetyl-CoA = N-terminal N(alpha)-acetyl-L-alpha-aminoacyl-[protein] + CoA + H(+). It carries out the reaction L-lysyl-[protein] + acetyl-CoA = N(6)-acetyl-L-lysyl-[protein] + CoA + H(+). The enzyme catalyses N-terminal L-methionyl-[protein] + acetyl-CoA = N-terminal N(alpha)-acetyl-L-methionyl-[protein] + CoA + H(+). It catalyses the reaction N-terminal L-seryl-[protein] + acetyl-CoA = N-terminal N(alpha)-acetyl-L-seryl-[protein] + CoA + H(+). The catalysed reaction is N-terminal L-valyl-[protein] + acetyl-CoA = N-terminal N(alpha)-acetyl-L-valyl-[protein] + CoA + H(+). It carries out the reaction N-terminal L-threonyl-[protein] + acetyl-CoA = N-terminal N(alpha)-acetyl-L-threonyl-[protein] + CoA + H(+). The enzyme catalyses N-terminal L-alanyl-[protein] + acetyl-CoA = N-terminal N(alpha)-acetyl-L-alanyl-[protein] + CoA + H(+). It catalyses the reaction N-terminal glycyl-[protein] + acetyl-CoA = N-terminal N(alpha)-acetylglycyl-[protein] + CoA + H(+). Functionally, protein acetyltransferase with dual specificity triggering both N-alpha-acetylation (NTA), with a preference for leucine, methionine, serine, valine and to a lower extent threonine and alanine as substrates (can also use glycine), and epsilon-lysine acetylation (KA) of several plastid proteins. The chain is GCN5-related N-acetyltransferase 10, chloroplastic from Arabidopsis thaliana (Mouse-ear cress).